A 902-amino-acid polypeptide reads, in one-letter code: Adhesion G-protein coupled receptor D1 (902 aa).

Residues 1–25 (MKKLLPLCCWHSWLLLFYCDFQVRG) form the signal peptide. Residues 26 to 598 (AHTRSHVHPG…GHQVALSSIS (573 aa)) are Extracellular-facing. 15 N-linked (GlcNAc...) asparagine glycosylation sites follow: Asn-68, Asn-76, Asn-83, Asn-89, Asn-121, Asn-183, Asn-217, Asn-310, Asn-330, Asn-337, Asn-347, Asn-422, Asn-504, Asn-529, and Asn-561. The 194-residue stretch at 111-304 (KGVTFLYYRK…VNTMAPTNAY (194 aa)) folds into the Pentraxin (PTX) domain. One can recognise a GAIN-B domain in the interval 399 to 585 (QVAIVGSSSM…AILMQVVPLE (187 aa)). Intrachain disulfides connect Cys-538–Cys-567 and Cys-555–Cys-569. Residues 538–585 (CAFLDFSSGEGIWSNQGCALTEGNLSYSICRCTHLTNFAILMQVVPLE) form a GPS region. The stachel stretch occupies residues 574–582 (NFAILMQVV). Gln-591 is a binding site for 17beta-hydroxy-5alpha-androstan-3-one. The chain crosses the membrane as a helical span at residues 599–619 (YIGCSLSVLCLAITLVTFAVL). Topologically, residues 620–630 (SSVSTIRNQRY) are cytoplasmic. Residues 631-651 (HIHANLSCAVLVAQVLLLISF) traverse the membrane as a helical segment. Over 652 to 661 (RFEPGTAPCQ) the chain is Extracellular. An intrachain disulfide couples Cys-660 to Cys-732. A helical membrane pass occupies residues 662 to 682 (VLAMLLHYFFLSAFAWMLVEG). Over 683-702 (LHLYSMVIKVFGSEDSKHRY) the chain is Cytoplasmic. Residues 703–723 (YYGIGWGFPLLICIISIVFAM) form a helical membrane-spanning segment. Residues 724–739 (DSYGTSKNCWLSLGNG) are Extracellular-facing. A helical transmembrane segment spans residues 740–760 (AIWAFVAPALFIIVVNIGILI). The Cytoplasmic portion of the chain corresponds to 761–788 (AVTRVISQISAENYKIHGDPSAFKLTAK). The chain crosses the membrane as a helical span at residues 789–809 (AVAVLLPILGTSWVFGVLAVN). Topologically, residues 810–812 (NQA) are extracellular. A helical transmembrane segment spans residues 813-833 (MVFQYMFAILNSLQGFFIFLF). Residues 834–902 (HCLLNSEVRA…SGHRVDLSAV (69 aa)) are Cytoplasmic-facing. The segment at 865 to 902 (KPFSSDIMNGTRPATGSTRLSPWDKSSHSGHRVDLSAV) is disordered. Polar residues predominate over residues 870–884 (DIMNGTRPATGSTRL). Residues 889–902 (KSSHSGHRVDLSAV) are compositionally biased toward basic and acidic residues.

Belongs to the G-protein coupled receptor 2 family. Adhesion G-protein coupled receptor (ADGR) subfamily. Heterodimer of 2 chains generated by proteolytic processing; the large extracellular N-terminal fragment and the membrane-bound C-terminal fragment predominantly remain associated and non-covalently linked. Interacts with ESYT1; interaction takes place in absence of cytosolic calcium and inhibits the G protein-coupled receptor activity of ADGRD1. Post-translationally, autoproteolytically processed at the GPS region of the GAIN-B domain; this cleavage modulates receptor activity. Cleavage takes place early in the secretory pathway before N-glycosylation.

It is found in the cell membrane. Its activity is regulated as follows. Forms a heterodimer of 2 chains generated by proteolytic processing that remain associated through non-covalent interactions mediated by the GAIN-B domain. In the inactivated receptor, the Stachel sequence (also named stalk) is embedded in the GAIN-B domain, where it adopts a beta-strand conformation. On activation, the Stachel moves into the 7 transmembrane region and adopts a twisted hook-shaped configuration that forms contacts within the receptor, leading to coupling of a G-alpha protein, which activates signaling. The cleaved GAIN-B and N-terminal domains can then dissociate from the rest of the receptor. Interaction with ESYT1 in absence of cytosolic calcium inhibits the G protein-coupled receptor activity; interaction and inhibition is relieved when cytosolic calcium increases. Adhesion G-protein coupled receptor (aGPCR) for androgen hormone 5alpha-dihydrotestosterone (5alpha-DHT), also named 17beta-hydroxy-5alpha-androstan-3-one, the most potent hormone among androgens. Also activated by methenolone drug. Ligand binding causes a conformation change that triggers signaling via guanine nucleotide-binding proteins (G proteins) and modulates the activity of downstream effectors, such as adenylate cyclase. ADGRD1 is coupled to G(s) G proteins and mediates activation of adenylate cyclase activity. Acts as a 5alpha-DHT receptor in muscle cells, thereby increasing intracellular cyclic AMP (cAMP) levels and enhancing muscle strength. This is Adhesion G-protein coupled receptor D1 (ADGRD1) from Bos taurus (Bovine).